The sequence spans 488 residues: Ribulose bisphosphate carboxylase large chain (488 aa).

N127 and T177 together coordinate substrate. K179 acts as the Proton acceptor in catalysis. K181 is a substrate binding site. Residues K205, D207, and E208 each contribute to the Mg(2+) site. K205 carries the N6-carboxylysine modification. Residue H297 is the Proton acceptor of the active site. Substrate-binding residues include R298, H330, and S382.

The protein belongs to the RuBisCO large chain family. Type I subfamily. Heterohexadecamer of 8 large chains and 8 small chains. Requires Mg(2+) as cofactor.

It is found in the plastid. The protein localises to the chloroplast. The enzyme catalyses 2 (2R)-3-phosphoglycerate + 2 H(+) = D-ribulose 1,5-bisphosphate + CO2 + H2O. The catalysed reaction is D-ribulose 1,5-bisphosphate + O2 = 2-phosphoglycolate + (2R)-3-phosphoglycerate + 2 H(+). In terms of biological role, ruBisCO catalyzes two reactions: the carboxylation of D-ribulose 1,5-bisphosphate, the primary event in carbon dioxide fixation, as well as the oxidative fragmentation of the pentose substrate in the photorespiration process. Both reactions occur simultaneously and in competition at the same active site. This Porphyridium aerugineum (Red microalga) protein is Ribulose bisphosphate carboxylase large chain.